We begin with the raw amino-acid sequence, 468 residues long: Serine/threonine-protein kinase ULK3 (468 aa).

One can recognise a Protein kinase domain in the interval 13 to 269 (FILTEKLGSG…FIEFFAHLFV (257 aa)). Residues 19–27 (LGSGSYATV) and Lys43 each bind ATP. Asp136 functions as the Proton acceptor in the catalytic mechanism. 2 consecutive MIT domains span residues 279–347 (TLEK…KVLV) and 374–442 (RLFS…KEQM).

Belongs to the protein kinase superfamily. Ser/Thr protein kinase family. APG1/unc-51/ULK1 subfamily.

The protein localises to the cytoplasm. The enzyme catalyses L-seryl-[protein] + ATP = O-phospho-L-seryl-[protein] + ADP + H(+). It catalyses the reaction L-threonyl-[protein] + ATP = O-phospho-L-threonyl-[protein] + ADP + H(+). In terms of biological role, serine/threonine protein kinase that acts as a regulator of Sonic hedgehog (SHH) signaling and autophagy. The sequence is that of Serine/threonine-protein kinase ULK3 (ulk3) from Xenopus laevis (African clawed frog).